We begin with the raw amino-acid sequence, 385 residues long: MTPPSTGGEATPVLVLMVALGSILLVSASNWLSVYLAIELPTLSLFILVAQKRGSGFSAEAGLKYFVLGALASGLFLFGCALLCGLTGGTSIPCIDLVLNQGRGPALDPSGVITPIGSLLITGALLFKLSAAPFHMWAPDVYDGAPTTTTALLATVPKVGVFSILVSIGPVANVLLIATIFSMVVGALGALNQTKIKRLLAYSGIAHMGFVLWGIEIGTFESVQASLIYMILYVIMSVCAFAMVLALGGLKNLIVEFSGLSRKEPALAITLALTFLSIAGVPPLIGFFSKWWILLSGITYQYYLVSILAVICSVVAGVYYVRIVKIIYFQADSFFLVGLKTLREKKRINFRKSLLIGASFYLMGFMIISPNLLLQLAHWATVGLF.

Transmembrane regions (helical) follow at residues 12 to 32 (PVLV…SNWL), 34 to 50 (VYLA…ILVA), 66 to 86 (FVLG…LCGL), 112 to 132 (VITP…LSAA), 161 to 181 (VFSI…ATIF), 200 to 220 (LAYS…IGTF), 227 to 247 (LIYM…VLAL), 268 to 288 (AITL…IGFF), 291 to 311 (WWIL…LAVI), and 354 to 374 (LLIG…NLLL).

It belongs to the complex I subunit 2 family.

The protein localises to the mitochondrion inner membrane. The enzyme catalyses a ubiquinone + NADH + 5 H(+)(in) = a ubiquinol + NAD(+) + 4 H(+)(out). In terms of biological role, core subunit of the mitochondrial membrane respiratory chain NADH dehydrogenase (Complex I) that is believed to belong to the minimal assembly required for catalysis. Complex I functions in the transfer of electrons from NADH to the respiratory chain. The immediate electron acceptor for the enzyme is believed to be ubiquinone. This chain is NADH-ubiquinone oxidoreductase chain 2 (ND2), found in Metridium senile (Brown sea anemone).